Consider the following 236-residue polypeptide: DCN1-like protein 5 (236 aa).

S9, S40, and S47 each carry phosphoserine. A DCUN1 domain is found at 45–231; that stretch reads FSSKKCLAWF…LLDEFVEWHK (187 aa).

In terms of assembly, part of a complex that contains DCUN1D5, CUL1 and RBX1; this interaction is bridged by CUL1. Interacts (via the DCUN1 domain) with the unneddylated cullins: interacts with CUL1, CUL2, CUL3, CUL4A, CUL4B and CUL5; these interactions promote the cullin neddylation and the identity of the cullin dictates the affinity of the interaction. Interacts (via DCUN1 domain) with UBE2M (N-terminally acetylated form) and probably with UBE2F (N-terminally acetylated form). May also interact with regulators or subunits of cullin-RING ligases such as RBX1, RNF7, ELOB and DDB1; these interactions are bridged by cullins. Interacts with CAND1; this interaction is bridged by cullins and strongly inhibits the neddylation of cullins. These CAND-cullin-DCNL complexes can only be neddylated in the presence of a substrate adapter. Post-translationally, phosphorylation at Ser-40 is independent of cullin's interaction. Phosphorylated in response to both TICAM1 and MYD88 dependent Toll-like receptor (TLR) pathway activation. Phosphorylated in response to IL1B stimulation.

The protein resides in the nucleus. It localises to the cytoplasm. It is found in the cytoskeleton. Its subcellular location is the spindle. Its function is as follows. Contributes to the neddylation of all cullins by transferring NEDD8 from N-terminally acetylated NEDD8-conjugating E2s enzyme to different cullin C-terminal domain-RBX complexes which is necessary for the activation of cullin-RING E3 ubiquitin ligases (CRLs). May play a role in DNA damage response and may participate in cell proliferation and anchorage-independent cell growth. The sequence is that of DCN1-like protein 5 (DCUN1D5) from Bos taurus (Bovine).